The following is a 123-amino-acid chain: UPF0738 protein Bcer98_0913 (123 aa).

It belongs to the UPF0738 family.

In Bacillus cytotoxicus (strain DSM 22905 / CIP 110041 / 391-98 / NVH 391-98), this protein is UPF0738 protein Bcer98_0913.